The chain runs to 54 residues: Putative neurotoxin-I (54 aa).

3 cysteine pairs are disulfide-bonded: C20–C42, C28–C51, and C32–C53.

As to expression, expressed by the venom gland.

It is found in the secreted. The protein is Putative neurotoxin-I of Lychas mucronatus (Chinese swimming scorpion).